The following is a 283-amino-acid chain: Release factor glutamine methyltransferase (283 aa).

S-adenosyl-L-methionine-binding positions include 121 to 125, Asp144, and Asn188; that span reads GTGSG. 188–191 is a substrate binding site; sequence NPPY.

It belongs to the protein N5-glutamine methyltransferase family. PrmC subfamily.

It catalyses the reaction L-glutaminyl-[peptide chain release factor] + S-adenosyl-L-methionine = N(5)-methyl-L-glutaminyl-[peptide chain release factor] + S-adenosyl-L-homocysteine + H(+). Its function is as follows. Methylates the class 1 translation termination release factors RF1/PrfA and RF2/PrfB on the glutamine residue of the universally conserved GGQ motif. This is Release factor glutamine methyltransferase from Bacillus anthracis.